Here is a 304-residue protein sequence, read N- to C-terminus: MDYQQILDTINDEMSYRDVTGKVASYIPELAKVDRRKFGMHVYCGDQQHFSFGDSEENFSIQSISKVFTLAMAMRLMGEDLWDRLDVEPSGDPFNSLTQLEYESGIPRNPFINAGALVISDILVDQLEDPKKELLEFVRKITGDDNIHYNETVAASEKSTGYRNIALVNYIKALGNIKCDVEPIVDFYFYQCSLAMSCSQLSKAFMIFANKGRILETDEKILKPKTVKRINALMQTCGFYDEAGEFSFQVGMPGKSGVGGGIVAIHPDNYSVAVWSPILNENGNSELGMKALERFTTLTGVSVF.

Positions 63, 113, 157, 164, 188, 240, and 258 each coordinate substrate.

It belongs to the glutaminase family. As to quaternary structure, homotetramer.

It catalyses the reaction L-glutamine + H2O = L-glutamate + NH4(+). The chain is Glutaminase from Christiangramia forsetii (strain DSM 17595 / CGMCC 1.15422 / KT0803) (Gramella forsetii).